Here is a 969-residue protein sequence, read N- to C-terminus: Chromosome transmission fidelity protein 18 homolog (969 aa).

Residues 30–97 (EGTRDQAPPG…APSSPMVKRP (68 aa)) form a disordered region. Phosphothreonine is present on T51. A Phosphoserine modification is found at S221. Disordered regions lie at residues 250–269 (SEGE…APGQ) and 318–340 (RKPR…GKWK). Positions 257 to 268 (LEGPPAEEPAPG) are enriched in low complexity. 369–376 (GPPGLGKT) provides a ligand contact to ATP. The interval 856–889 (ARSGPQVDQGSSGPASLWTDSGEKGTRQPAPRNH) is disordered. The span at 876-889 (SGEKGTRQPAPRNH) shows a compositional bias: basic and acidic residues.

This sequence belongs to the activator 1 small subunits family. CTF18 subfamily. In terms of assembly, component of the CTF18-RFC complex, which consists of CTF18, CTF8, DCC1, RFC2, RFC3, RFC4 and RFC5. During assembly of the CTF18-RFC complex, CTF18 may first assemble into a subcomplex with RFC2, RFC3, RFC4 and RFC5. CTF18 then interacts directly with CTF8, which in turn interacts with DCC1. The CTF18-RFC complex associates with PCNA and with DNA polymerase POLH. The CTF18-RFC complex does not interact with the Rad9/Rad1/Hus1 complex. CTF18 interacts with SMC1A and RAD21. Interacts with DDX11.

It is found in the nucleus. Functionally, chromosome cohesion factor involved in sister chromatid cohesion and fidelity of chromosome transmission. Component of one of the cell nuclear antigen loader complexes, CTF18-replication factor C (CTF18-RFC), which consists of CTF18, CTF8, DCC1, RFC2, RFC3, RFC4 and RFC5. The CTF18-RFC complex binds to single-stranded and primed DNAs and has weak ATPase activity that is stimulated by the presence of primed DNA, replication protein A (RPA) and by proliferating cell nuclear antigen (PCNA). The CTF18-RFC complex catalyzes the ATP-dependent loading of PCNA onto primed and gapped DNA. Interacts with and stimulates DNA polymerase POLH. During DNA repair synthesis, involved in loading DNA polymerase POLE at the sites of local damage. This is Chromosome transmission fidelity protein 18 homolog (Chtf18) from Mus musculus (Mouse).